The following is a 188-amino-acid chain: Heparin-binding hemagglutinin homolog (188 aa).

Positions 162 to 188 (KAAAPARKAPAKKAPAKKAPAKKVTQK) are disordered. A compositionally biased stretch (basic residues) spans 170-188 (APAKKAPAKKAPAKKVTQK).

It to M.tuberculosis HbhA.

In terms of biological role, might mediate adherence to host cells by binding sulfated glycoconjugates. This is Heparin-binding hemagglutinin homolog (hbhA) from Mycobacterium leprae (strain TN).